Reading from the N-terminus, the 340-residue chain is Citramalyl-CoA lyase, mitochondrial (340 aa).

Residues 1-22 (MALRLLRRAARGAAAAALLRLK) constitute a mitochondrion transit peptide. Substrate is bound by residues Tyr-50, Lys-57, and Lys-61. Residues Lys-57 and Lys-61 each carry the N6-acetyllysine modification. Residues Lys-82 and Lys-92 each carry the N6-acetyllysine; alternate modification. 2 positions are modified to N6-succinyllysine; alternate: Lys-82 and Lys-92. Arg-107 contacts substrate. Mg(2+) contacts are provided by Glu-171 and Asp-206. 272-273 (IH) lines the substrate pocket. Lys-309 is subject to N6-succinyllysine. Residue Asp-320 is part of the active site.

It belongs to the HpcH/HpaI aldolase family. Citrate lyase beta subunit-like subfamily. Homotrimer. It depends on Mg(2+) as a cofactor.

It is found in the mitochondrion. It catalyses the reaction glyoxylate + acetyl-CoA + H2O = (S)-malate + CoA + H(+). The enzyme catalyses propanoyl-CoA + glyoxylate + H2O = 3-methylmalate + CoA + H(+). It carries out the reaction (3S)-citramalyl-CoA = pyruvate + acetyl-CoA. The catalysed reaction is (S)-malyl-CoA + H2O = (S)-malate + CoA + H(+). Its function is as follows. Mitochondrial citramalyl-CoA lyase indirectly involved in the vitamin B12 metabolism. Converts citramalyl-CoA into acetyl-CoA and pyruvate in the C5-dicarboxylate catabolism pathway. The C5-dicarboxylate catabolism pathway is required to detoxify itaconate, a vitamin B12-poisoning metabolite. Also acts as a malate synthase in vitro, converting glyoxylate and acetyl-CoA to malate. Also displays malyl-CoA thioesterase activity. Also acts as a beta-methylmalate synthase in vitro, by mediating conversion of glyoxylate and propionyl-CoA to beta-methylmalate. Also has very weak citramalate synthase activity in vitro. The chain is Citramalyl-CoA lyase, mitochondrial from Homo sapiens (Human).